A 277-amino-acid chain; its full sequence is Putative ankyrin repeat protein L81 (277 aa).

ANK repeat units follow at residues 150 to 179 (FGQT…DLHQ) and 183 to 215 (QGRS…DLYQ).

This Acanthamoeba polyphaga (Amoeba) protein is Putative ankyrin repeat protein L81.